Reading from the N-terminus, the 160-residue chain is Troponin C, skeletal muscle (160 aa).

T2 bears the N-acetylthreonine mark. EF-hand domains follow at residues E15–T50, P51–E86, K91–H126, and V127–Q160. Positions 28, 30, 34, 39, 64, 66, 68, 70, 75, 104, 106, 108, 110, 115, 140, 142, 144, 146, and 151 each coordinate Ca(2+).

This sequence belongs to the troponin C family. Fast skeletal muscle.

Functionally, troponin is the central regulatory protein of striated muscle contraction. Tn consists of three components: Tn-I which is the inhibitor of actomyosin ATPase, Tn-T which contains the binding site for tropomyosin and Tn-C. The binding of calcium to Tn-C abolishes the inhibitory action of Tn on actin filaments. This chain is Troponin C, skeletal muscle (Tnnc2), found in Mus musculus (Mouse).